The chain runs to 393 residues: Asparagine--oxo-acid transaminase (393 aa).

The L-asparagine site is built by glycine 39, tryptophan 126, and asparagine 176. At lysine 239 the chain carries N6-(pyridoxal phosphate)lysine. An L-asparagine-binding site is contributed by arginine 370.

This sequence belongs to the class-I pyridoxal-phosphate-dependent aminotransferase family. Pyridoxal 5'-phosphate serves as cofactor.

The enzyme catalyses a 2-oxocarboxylate + L-asparagine = 2-oxosuccinamate + an L-alpha-amino acid. It carries out the reaction L-asparagine + 2-oxoglutarate = 2-oxosuccinamate + L-glutamate. Functionally, catalyzes the transamination reaction between L-asparagine and 2-oxoglutarate to produce L-glutamate and 2-oxosuccinamate. Is not active with pyruvate as amine acceptor. May also use other amino acids as substrates. The polypeptide is Asparagine--oxo-acid transaminase (Streptococcus mutans serotype c (strain ATCC 700610 / UA159)).